A 209-amino-acid chain; its full sequence is Ubiquinone biosynthesis protein COQ4 homolog 2, mitochondrial (209 aa).

Zn(2+) contacts are provided by H118, D119, H122, and E134.

This sequence belongs to the COQ4 family. In terms of assembly, component of a multi-subunit COQ enzyme complex. Zn(2+) serves as cofactor.

It localises to the mitochondrion inner membrane. It catalyses the reaction a 4-hydroxy-3-methoxy-5-(all-trans-polyprenyl)benzoate + H(+) = a 2-methoxy-6-(all-trans-polyprenyl)phenol + CO2. It functions in the pathway cofactor biosynthesis; ubiquinone biosynthesis. Functionally, lyase that catalyzes the C1-decarboxylation of 4-hydroxy-3-methoxy-5-(all-trans-polyprenyl)benzoic acid into 2-methoxy-6-(all-trans-polyprenyl)phenol during ubiquinone biosynthesis. The sequence is that of Ubiquinone biosynthesis protein COQ4 homolog 2, mitochondrial from Paramecium tetraurelia.